A 760-amino-acid polypeptide reads, in one-letter code: ER membrane protein complex subunit 1 (760 aa).

Residues 1 to 24 form the signal peptide; the sequence is MKITCTDLVYVFILLFLNTSCVQA. Residues 25-723 lie on the Lumenal side of the membrane; sequence VFSDDAFITD…PSGQFDLMSP (699 aa). Residues Asn73, Asn106, Asn192, Asn202, Asn420, Asn443, Asn574, and Asn578 are each glycosylated (N-linked (GlcNAc...) asparagine). A helical membrane pass occupies residues 724-744; that stretch reads TFEKGKLLITIFVLLVITYFI. Over 745–760 the chain is Cytoplasmic; that stretch reads RPSVSNKKLKSQWLIK.

Belongs to the EMC1 family. As to quaternary structure, component of the ER membrane protein complex (EMC), which is composed of EMC1, EMC2, EMC3, EMC4, EMC5 and EMC6. N-glycosylated.

It localises to the endoplasmic reticulum membrane. Part of the endoplasmic reticulum membrane protein complex (EMC) that enables the energy-independent insertion into endoplasmic reticulum membranes of newly synthesized membrane proteins. Preferentially accommodates proteins with transmembrane domains that are weakly hydrophobic or contain destabilizing features such as charged and aromatic residues. Involved in the cotranslational insertion of multi-pass membrane proteins in which stop-transfer membrane-anchor sequences become ER membrane spanning helices. It is also required for the post-translational insertion of tail-anchored/TA proteins in endoplasmic reticulum membranes. By mediating the proper cotranslational insertion of N-terminal transmembrane domains in an N-exo topology, with translocated N-terminus in the lumen of the ER, controls the topology of multi-pass membrane proteins. The protein is ER membrane protein complex subunit 1 (EMC1) of Saccharomyces cerevisiae (strain ATCC 204508 / S288c) (Baker's yeast).